The sequence spans 376 residues: Glutamate 5-kinase (376 aa).

Lysine 18 serves as a coordination point for ATP. Residues serine 58, aspartate 145, and asparagine 157 each coordinate substrate. ATP contacts are provided by residues 177-178 and 218-224; these read SD and TGGMASK. Residues 280–358 form the PUA domain; it reads TGALTLDAGA…SELPGELRRP (79 aa).

The protein belongs to the glutamate 5-kinase family.

It is found in the cytoplasm. It catalyses the reaction L-glutamate + ATP = L-glutamyl 5-phosphate + ADP. It participates in amino-acid biosynthesis; L-proline biosynthesis; L-glutamate 5-semialdehyde from L-glutamate: step 1/2. Functionally, catalyzes the transfer of a phosphate group to glutamate to form L-glutamate 5-phosphate. In Mycobacterium tuberculosis (strain ATCC 25177 / H37Ra), this protein is Glutamate 5-kinase.